The sequence spans 588 residues: Ribonuclease Y (588 aa).

The helical transmembrane segment at 7 to 27 threads the bilayer; the sequence is VLLVAVLLLTVVVVGAVLVGV. Residues 278-359 form the KH domain; that stretch reads VVSVLHLPGD…HRIEEVHDLA (82 aa). In terms of domain architecture, HD spans 404-497; it reads VLKHLVESAH…TQASDACSGG (94 aa).

This sequence belongs to the RNase Y family.

It localises to the cell membrane. Its function is as follows. Endoribonuclease that initiates mRNA decay. The chain is Ribonuclease Y from Salinispora tropica (strain ATCC BAA-916 / DSM 44818 / JCM 13857 / NBRC 105044 / CNB-440).